The sequence spans 206 residues: Small ribosomal subunit protein uS4 (206 aa).

The region spanning 96 to 156 (GRLDNVVYRM…EKSKKQARIK (61 aa)) is the S4 RNA-binding domain.

The protein belongs to the universal ribosomal protein uS4 family. As to quaternary structure, part of the 30S ribosomal subunit. Contacts protein S5. The interaction surface between S4 and S5 is involved in control of translational fidelity.

Functionally, one of the primary rRNA binding proteins, it binds directly to 16S rRNA where it nucleates assembly of the body of the 30S subunit. In terms of biological role, with S5 and S12 plays an important role in translational accuracy. The chain is Small ribosomal subunit protein uS4 from Mannheimia succiniciproducens (strain KCTC 0769BP / MBEL55E).